The chain runs to 189 residues: uncharacterized protein (189 aa).

An N-terminal signal peptide occupies residues Met-1–Ala-23. A glycan (N-linked (GlcNAc...) asparagine) is linked at Asn-72.

This is an uncharacterized protein from Homo sapiens (Human).